A 447-amino-acid polypeptide reads, in one-letter code: N-succinylarginine dihydrolase (447 aa).

Substrate contacts are provided by residues 19–28 (AGLSFGNEAS), N110, and 137–138 (HR). E174 is an active-site residue. Position 212 (R212) interacts with substrate. Residue H248 is part of the active site. Substrate is bound by residues D250 and N359. Catalysis depends on C365, which acts as the Nucleophile.

This sequence belongs to the succinylarginine dihydrolase family. As to quaternary structure, homodimer.

It carries out the reaction N(2)-succinyl-L-arginine + 2 H2O + 2 H(+) = N(2)-succinyl-L-ornithine + 2 NH4(+) + CO2. It participates in amino-acid degradation; L-arginine degradation via AST pathway; L-glutamate and succinate from L-arginine: step 2/5. Functionally, catalyzes the hydrolysis of N(2)-succinylarginine into N(2)-succinylornithine, ammonia and CO(2). This is N-succinylarginine dihydrolase from Salmonella agona (strain SL483).